The following is a 101-amino-acid chain: Ubiquitin-related modifier 1 (101 aa).

Residue glycine 101 is modified to 1-thioglycine. Residue glycine 101 forms a Glycyl lysine isopeptide (Gly-Lys) (interchain with K-? in acceptor proteins) linkage.

The protein belongs to the URM1 family. Post-translationally, C-terminal thiocarboxylation occurs in 2 steps, it is first acyl-adenylated (-COAMP) via the hesA/moeB/thiF part of UBA4, then thiocarboxylated (-COSH) via the rhodanese domain of UBA4.

Its subcellular location is the cytoplasm. It functions in the pathway tRNA modification; 5-methoxycarbonylmethyl-2-thiouridine-tRNA biosynthesis. Functionally, acts as a sulfur carrier required for 2-thiolation of mcm(5)S(2)U at tRNA wobble positions of cytosolic tRNA(Lys), tRNA(Glu) and tRNA(Gln). Serves as sulfur donor in tRNA 2-thiolation reaction by being thiocarboxylated (-COSH) at its C-terminus by the MOCS3 homolog UBA4. The sulfur is then transferred to tRNA to form 2-thiolation of mcm(5)S(2)U. Prior mcm(5) tRNA modification by the elongator complex is required for 2-thiolation. Also acts as a ubiquitin-like protein (UBL) that is covalently conjugated via an isopeptide bond to lysine residues of target proteins such as AHP1. The thiocarboxylated form serves as substrate for conjugation and oxidative stress specifically induces the formation of UBL-protein conjugates. The sequence is that of Ubiquitin-related modifier 1 from Candida albicans (strain SC5314 / ATCC MYA-2876) (Yeast).